A 510-amino-acid chain; its full sequence is Probable serine/threonine-protein kinase 2 (510 aa).

The 254-residue stretch at 111–364 folds into the Protein kinase domain; it reads YVLNKKIGKG…ALQALGHQWF (254 aa). ATP-binding positions include 117-125 and Lys-140; that span reads IGKGSFSTA. Asp-230 (proton acceptor) is an active-site residue. Residues 408-428 are disordered; it reads NDDIYNNNNNNNQLDPNKNHK.

It belongs to the protein kinase superfamily. Ser/Thr protein kinase family.

It localises to the membrane. It carries out the reaction L-seryl-[protein] + ATP = O-phospho-L-seryl-[protein] + ADP + H(+). The enzyme catalyses L-threonyl-[protein] + ATP = O-phospho-L-threonyl-[protein] + ADP + H(+). The protein is Probable serine/threonine-protein kinase 2 (PK2) of Plasmodium falciparum (isolate K1 / Thailand).